Reading from the N-terminus, the 141-residue chain is uncharacterized protein (141 aa).

This is an uncharacterized protein from Acheta domesticus (House cricket).